A 345-amino-acid chain; its full sequence is Isopentenyl-diphosphate delta-isomerase (345 aa).

6–7 (RK) is a binding site for substrate. FMN is bound by residues 63-65 (SMT), serine 93, and asparagine 122. 93–95 (SQR) provides a ligand contact to substrate. Substrate is bound at residue glutamine 156. Residue glutamate 157 participates in Mg(2+) binding. FMN is bound by residues lysine 188, threonine 218, 265 to 267 (GLR), and 286 to 287 (AL).

The protein belongs to the IPP isomerase type 2 family. Homooctamer. Dimer of tetramers. The cofactor is FMN. Requires NADPH as cofactor. Mg(2+) serves as cofactor.

The protein resides in the cytoplasm. It carries out the reaction isopentenyl diphosphate = dimethylallyl diphosphate. Its function is as follows. Involved in the biosynthesis of isoprenoids. Catalyzes the 1,3-allylic rearrangement of the homoallylic substrate isopentenyl (IPP) to its allylic isomer, dimethylallyl diphosphate (DMAPP). This is Isopentenyl-diphosphate delta-isomerase from Archaeoglobus fulgidus (strain ATCC 49558 / DSM 4304 / JCM 9628 / NBRC 100126 / VC-16).